The chain runs to 115 residues: Large ribosomal subunit protein bL19 (115 aa).

The protein belongs to the bacterial ribosomal protein bL19 family.

This protein is located at the 30S-50S ribosomal subunit interface and may play a role in the structure and function of the aminoacyl-tRNA binding site. The protein is Large ribosomal subunit protein bL19 of Francisella tularensis subsp. holarctica (strain FTNF002-00 / FTA).